The chain runs to 262 residues: Pyridoxine 5'-phosphate synthase (262 aa).

A 3-amino-2-oxopropyl phosphate-binding site is contributed by N6. 8–9 (DH) contributes to the 1-deoxy-D-xylulose 5-phosphate binding site. R17 is a binding site for 3-amino-2-oxopropyl phosphate. Catalysis depends on H43, which acts as the Proton acceptor. 2 residues coordinate 1-deoxy-D-xylulose 5-phosphate: R45 and H50. The active-site Proton acceptor is the E70. T102 provides a ligand contact to 1-deoxy-D-xylulose 5-phosphate. The active-site Proton donor is H215. Residues G216 and 237-238 (GH) each bind 3-amino-2-oxopropyl phosphate.

It belongs to the PNP synthase family. In terms of assembly, homooctamer; tetramer of dimers.

The protein resides in the cytoplasm. It carries out the reaction 3-amino-2-oxopropyl phosphate + 1-deoxy-D-xylulose 5-phosphate = pyridoxine 5'-phosphate + phosphate + 2 H2O + H(+). It functions in the pathway cofactor biosynthesis; pyridoxine 5'-phosphate biosynthesis; pyridoxine 5'-phosphate from D-erythrose 4-phosphate: step 5/5. In terms of biological role, catalyzes the complicated ring closure reaction between the two acyclic compounds 1-deoxy-D-xylulose-5-phosphate (DXP) and 3-amino-2-oxopropyl phosphate (1-amino-acetone-3-phosphate or AAP) to form pyridoxine 5'-phosphate (PNP) and inorganic phosphate. This Helicobacter pylori (strain P12) protein is Pyridoxine 5'-phosphate synthase.